Consider the following 374-residue polypeptide: Chaperone protein DnaJ (374 aa).

In terms of domain architecture, J spans 5-70 (DYYKLLGVDR…EKRAGYDRYG (66 aa)). Residues 136–214 (GIQAPIHYVT…CNGSGRRRDE (79 aa)) form a CR-type zinc finger. Zn(2+)-binding residues include cysteine 149, cysteine 152, cysteine 166, cysteine 169, cysteine 188, cysteine 191, cysteine 202, and cysteine 205. CXXCXGXG motif repeat units lie at residues 149–156 (CDMCQGRG), 166–173 (CHTCQGSG), 188–195 (CTTCYGEG), and 202–209 (CKKCNGSG).

Belongs to the DnaJ family. Homodimer. The cofactor is Zn(2+).

The protein localises to the cytoplasm. Participates actively in the response to hyperosmotic and heat shock by preventing the aggregation of stress-denatured proteins and by disaggregating proteins, also in an autonomous, DnaK-independent fashion. Unfolded proteins bind initially to DnaJ; upon interaction with the DnaJ-bound protein, DnaK hydrolyzes its bound ATP, resulting in the formation of a stable complex. GrpE releases ADP from DnaK; ATP binding to DnaK triggers the release of the substrate protein, thus completing the reaction cycle. Several rounds of ATP-dependent interactions between DnaJ, DnaK and GrpE are required for fully efficient folding. Also involved, together with DnaK and GrpE, in the DNA replication of plasmids through activation of initiation proteins. The chain is Chaperone protein DnaJ from Wolbachia sp. subsp. Brugia malayi (strain TRS).